The primary structure comprises 64 residues: SPbeta prophage-derived uncharacterized protein YoqI (64 aa).

The sequence is that of SPbeta prophage-derived uncharacterized protein YoqI (yoqI) from Bacillus subtilis (strain 168).